Reading from the N-terminus, the 486-residue chain is Probable cytosol aminopeptidase (486 aa).

Belongs to the peptidase M17 family. It depends on Mn(2+) as a cofactor.

The protein localises to the cytoplasm. The catalysed reaction is Release of an N-terminal amino acid, Xaa-|-Yaa-, in which Xaa is preferably Leu, but may be other amino acids including Pro although not Arg or Lys, and Yaa may be Pro. Amino acid amides and methyl esters are also readily hydrolyzed, but rates on arylamides are exceedingly low.. The enzyme catalyses Release of an N-terminal amino acid, preferentially leucine, but not glutamic or aspartic acids.. Functionally, presumably involved in the processing and regular turnover of intracellular proteins. Catalyzes the removal of unsubstituted N-terminal amino acids from various peptides. This is Probable cytosol aminopeptidase (pepA) from Synechococcus elongatus (strain ATCC 33912 / PCC 7942 / FACHB-805) (Anacystis nidulans R2).